Consider the following 122-residue polypeptide: Small ribosomal subunit protein uS13 (122 aa).

Residues 94-122 (KKLPVRGQRTHTNARTRKGPAKPIAGKKK) are disordered.

It belongs to the universal ribosomal protein uS13 family. As to quaternary structure, part of the 30S ribosomal subunit. Forms a loose heterodimer with protein S19. Forms two bridges to the 50S subunit in the 70S ribosome.

Located at the top of the head of the 30S subunit, it contacts several helices of the 16S rRNA. In the 70S ribosome it contacts the 23S rRNA (bridge B1a) and protein L5 of the 50S subunit (bridge B1b), connecting the 2 subunits; these bridges are implicated in subunit movement. Contacts the tRNAs in the A and P-sites. This chain is Small ribosomal subunit protein uS13, found in Hyphomonas neptunium (strain ATCC 15444).